Reading from the N-terminus, the 111-residue chain is Ig kappa chain V-III region PC 2485/PC 4039 (111 aa).

Positions 1 to 23 are framework-1; sequence DIVLTQSPASLAVSLGQRATISC. A disulfide bond links cysteine 23 and cysteine 92. The segment at 24-38 is complementarity-determining-1; sequence RASKSVSTSGYSYMH. The interval 39 to 53 is framework-2; sequence WYQQKPGQPPKLLIY. The interval 54–60 is complementarity-determining-2; it reads LASSLES. The framework-3 stretch occupies residues 61–92; that stretch reads GVPARFSGSGSGTDFTLNIQPVEEEDAAIYYC. The interval 93-101 is complementarity-determining-3; the sequence is QHSRELPLT. Positions 102–111 are framework-4; it reads FGAGTKLELK.

The sequence is that of Ig kappa chain V-III region PC 2485/PC 4039 from Mus musculus (Mouse).